The sequence spans 234 residues: Ubiquitin thioesterase OTUB2 (234 aa).

Positions 40–231 constitute an OTU domain; sequence TSIRKTKGDG…TSHYNILYAA (192 aa). Aspartate 48 is an active-site residue. Cysteine 51 serves as the catalytic Nucleophile. Residues histidine 205 and histidine 224 contribute to the active site.

Belongs to the peptidase C65 family.

It carries out the reaction Thiol-dependent hydrolysis of ester, thioester, amide, peptide and isopeptide bonds formed by the C-terminal Gly of ubiquitin (a 76-residue protein attached to proteins as an intracellular targeting signal).. In terms of biological role, hydrolase that can remove conjugated ubiquitin from proteins in vitro and may therefore play an important regulatory role at the level of protein turnover by preventing degradation. Mediates deubiquitination of 'Lys-11'-,'Lys-48'- and 'Lys-63'-linked polyubiquitin chains, with a preference for 'Lys-63'-linked polyubiquitin chains. The polypeptide is Ubiquitin thioesterase OTUB2 (Otub2) (Mus musculus (Mouse)).